Reading from the N-terminus, the 157-residue chain is Cell cycle regulator of non-homologous end joining (157 aa).

Position 1 is an N-acetylmethionine (methionine 1). Positions 1 to 21 (METLQSETKTRVLPSWLTAQV) match the KBM motif. Residues 77–147 (KACEQPALAG…SPEEEEEEDV (71 aa)) are disordered. The span at 98-107 (VSPHTSSGSS) shows a compositional bias: low complexity. Polar residues predominate over residues 123-136 (SPSQRPGGSSSACS). The short motif at 147–157 (VLKYVREIFFS) is the XLM element.

In terms of assembly, interacts (via KBM motif) with XRCC5/Ku80 and XRCC6/Ku70 heterodimer. Interacts (via XLF motif) with TRIM28/KAP1, ATM, MRE11, NBN and RAD50. Interacts with splicing factor SF3B1. Interacts with ERCC6L2; this interaction is DNA independent. Does not interact with XRCC5/Ku80 and XRCC6/Ku70 heterodimer. As to quaternary structure, interacts (via KBM motif) with XRCC5/Ku80 and XRCC6/Ku70 heterodimer.

It localises to the cytoplasm. Its subcellular location is the nucleus. The protein localises to the chromosome. Its function is as follows. Cell-cycle-specific regulator of classical non-homologous end joining (NHEJ) of DNA double-strand break (DSB) repair, which can act both as an activator or inhibitor of NHEJ, depending on the cell cycle phase. Acts as a regulator of DNA repair pathway choice by specifically inhibiting classical NHEJ during the S and G2 phases, thereby promoting error-free repair by homologous recombination during cell cycle phases when sister chromatids are present. Preferentially protects single-stranded overhangs at break sites by inhibiting classical NHEJ, thereby creating a local environment that favors homologous recombination. Acts via interaction with XRCC5/Ku80 and XRCC6/Ku70. In contrast, acts as an activator of NHEJ during G1 phase of the cell cycle: promotes classical NHEJ in G1 phase cells via multivalent interactions that increase the affinity of DNA damage response proteins for DSB-associated chromatin. Also involved in immunoglobulin V(D)J recombination. May also act as an indirect regulator of proteasome. This chain is Cell cycle regulator of non-homologous end joining, found in Homo sapiens (Human).